Consider the following 310-residue polypeptide: p-hydroxybenzoic acid efflux pump subunit AaeA (310 aa).

The chain crosses the membrane as a helical span at residues 12 to 32 (AITVILVILAFVAIFRAWVYY).

The protein belongs to the membrane fusion protein (MFP) (TC 8.A.1) family.

The protein localises to the cell inner membrane. In terms of biological role, forms an efflux pump with AaeB. This is p-hydroxybenzoic acid efflux pump subunit AaeA from Klebsiella pneumoniae (strain 342).